The chain runs to 192 residues: uncharacterized protein (192 aa).

The first 24 residues, 1-24, serve as a signal peptide directing secretion; that stretch reads MSGVLSCVLRACACAGLCCWVCMG. Residues 140 to 192 are disordered; the sequence is RAGADEGAGGNAAGCPEDTRGFARSPGDLMGGMNGDLGDEGETGEGGDNGAGE.

This is an uncharacterized protein from Human herpesvirus 6A (strain Uganda-1102) (HHV-6 variant A).